The following is a 1135-amino-acid chain: uncharacterized protein (1135 aa).

An N-terminal signal peptide occupies residues 1 to 28; the sequence is MALFPRGILIALVLSFVLNLGLVTKIHA. The next 7 helical transmembrane spans lie at 332–352, 359–379, 393–413, 495–515, 522–542, 555–575, and 700–720; these read IVTA…LLAG, EYIN…GINI, MIQW…NWVM, MLVS…AFMV, MISI…FLFA, MISF…MFAV, and IKNI…MYNF.

It belongs to the TrbL/VirB6 family.

It is found in the cell membrane. This is an uncharacterized protein from Rickettsia typhi (strain ATCC VR-144 / Wilmington).